We begin with the raw amino-acid sequence, 328 residues long: Tyrosine recombinase XerC (328 aa).

Positions 13–100 constitute a Core-binding (CB) domain; sequence QAPHPQIAAY…AWRGWFKWMA (88 aa). In terms of domain architecture, Tyr recombinase spans 122–319; the sequence is RLPKALSVEQ…DFQHLAKIYD (198 aa). Residues R162, K197, H271, R274, and H297 contribute to the active site. The active-site O-(3'-phospho-DNA)-tyrosine intermediate is the Y306.

This sequence belongs to the 'phage' integrase family. XerC subfamily. Forms a cyclic heterotetrameric complex composed of two molecules of XerC and two molecules of XerD.

Its subcellular location is the cytoplasm. Its function is as follows. Site-specific tyrosine recombinase, which acts by catalyzing the cutting and rejoining of the recombining DNA molecules. The XerC-XerD complex is essential to convert dimers of the bacterial chromosome into monomers to permit their segregation at cell division. It also contributes to the segregational stability of plasmids. In Ralstonia pickettii (strain 12J), this protein is Tyrosine recombinase XerC.